The primary structure comprises 354 residues: 3'-hydroxy-N-methyl-(S)-coclaurine 4'-O-methyltransferase 1 (354 aa).

Residue Asp-223 participates in S-adenosyl-L-methionine binding. The Proton acceptor role is filled by His-261.

The protein belongs to the class I-like SAM-binding methyltransferase superfamily. Cation-independent O-methyltransferase family. COMT subfamily. In terms of tissue distribution, expressed in roots, stems, leaves and flowers. Restricted to sieve elements of the phloem adjacent or proximal to laticifers.

The enzyme catalyses (S)-3'-hydroxy-N-methylcoclaurine + S-adenosyl-L-methionine = (S)-reticuline + S-adenosyl-L-homocysteine + H(+). Its pathway is alkaloid biosynthesis; (S)-reticuline biosynthesis; (S)-reticuline from (S)-norcoclaurine: step 4/4. Involved in the biosynthesis of benzylisoquinoline alkaloids. Catalyzes the transfer of the methyl group to the 4'-hydroxyl group of 3'-hydroxy-N-methylcoclaurine to form reticuline. Also involved in the papaverine biosynthesis. In Papaver somniferum (Opium poppy), this protein is 3'-hydroxy-N-methyl-(S)-coclaurine 4'-O-methyltransferase 1.